The primary structure comprises 426 residues: Flotillin-1 (426 aa).

Belongs to the band 7/mec-2 family. Flotillin subfamily. Heterooligomeric complex of flotillins 1 and 2 and caveolins 1 and 2. As to expression, expressed in brain and ventral nerve cord from stage 12-16 of embryogenesis.

It is found in the cell membrane. The protein resides in the membrane. Its subcellular location is the caveola. May act as a scaffolding protein within caveolar membranes, functionally participating in formation of caveolae or caveolae-like vesicles. The protein is Flotillin-1 of Drosophila melanogaster (Fruit fly).